A 306-amino-acid polypeptide reads, in one-letter code: Triplex capsid protein 2 (306 aa).

Belongs to the herpesviridae TRX2 protein family. In terms of assembly, interacts with TRX1 and major capisd protein/MCP.

It is found in the virion. It localises to the host nucleus. Its function is as follows. Structural component of the T=16 icosahedral capsid. The capsid is composed of pentamers and hexamers of major capsid protein/MCP, which are linked together by heterotrimers called triplexes. These triplexes are formed by a single molecule of triplex protein 1/TRX1 and two copies of triplex protein 2/TRX2. Additionally, TRX1 is required for efficient transport of TRX2 to the nucleus, which is the site of capsid assembly. The chain is Triplex capsid protein 2 from Human cytomegalovirus (strain AD169) (HHV-5).